The sequence spans 647 residues: MARNLCRNVQTTPRPLTALSLRRMVTPFHDLELQGSHCPRPRYFGSSTAKSAKKKSNNKAYSGSSMSAGDASAGPSRYPPLPEGWQAVIGIECHVQIKDKHKLFSTAELPTPSTPPNTLVTAFDAAHPGTLPTLNRSALRLAARTALSLNCQIHAESRFDRKHYFYSDLPAGYQITQKYMPLANNGQIKLLFDEGHLPSPEDEITVEIEQLQLEQDTAKSSYFDIGTTFRLDQASLADASNAEASPGAILHETDDDRVDRSFVDLNRAGAALMEIVSGPQMRTPEQAGAYVRKLQQLVRRIGASDGNMQEGSLRCDVNVSVNRIGEPFGTRCEVKNLNSVRFMMNAISFESHRQVKLLQQNGRVEQETRGYNESDGTTFRLRGKEDAPDYRYMPDPNLPPILLSEQQLHELRHGLPELPDARRARLVEQYGLSSRDINVLMRVGSEDERDGRIATQSLDTHAQQQTSSDAVDYFEQVATGRSAQTALNWIIHELMKGLNARNLPFKEWYLPAEYLGQLIDLVEDGQVTGTTAKTVIADLLSSAQSGHDGKTCLSLAAVRALAQSSSSPVFDLLKQRGLLALNTKKDLMPLVESAMERLPDEVAQVRKGNLKVAMRIVGQVMKDANGRANAKLVHQTILEQLGPTSAP.

Residues 1-16 (MARNLCRNVQTTPRPL) constitute a mitochondrion transit peptide. Residues 39–77 (PRPRYFGSSTAKSAKKKSNNKAYSGSSMSAGDASAGPSR) form a disordered region. Positions 58 to 76 (NKAYSGSSMSAGDASAGPS) are enriched in low complexity.

Belongs to the GatB/GatE family. GatB subfamily. In terms of assembly, subunit of the heterotrimeric GatCAB amidotransferase (AdT) complex, composed of A, B and C subunits.

It localises to the mitochondrion. The enzyme catalyses L-glutamyl-tRNA(Gln) + L-glutamine + ATP + H2O = L-glutaminyl-tRNA(Gln) + L-glutamate + ADP + phosphate + H(+). In terms of biological role, allows the formation of correctly charged Gln-tRNA(Gln) through the transamidation of misacylated Glu-tRNA(Gln) in the mitochondria. The reaction takes place in the presence of glutamine and ATP through an activated gamma-phospho-Glu-tRNA(Gln). The chain is Glutamyl-tRNA(Gln) amidotransferase subunit B, mitochondrial from Mycosarcoma maydis (Corn smut fungus).